We begin with the raw amino-acid sequence, 446 residues long: C-type lectin domain family 18 member A (446 aa).

Residues 1–26 (MLHPETSPGRGHLLAVLLALLGTAWA) form the signal peptide. One can recognise an SCP domain in the interval 52–182 (LSLHNRLRSW…AAIEAFVCAY (131 aa)). Asparagine 144 carries an N-linked (GlcNAc...) asparagine glycan. The EGF-like domain occupies 228–261 (PRNPCRMSCQNHGRLNISTCHCHCPPGYTGRYCQ). 4 disulfides stabilise this stretch: cysteine 236/cysteine 249, cysteine 251/cysteine 260, cysteine 327/cysteine 432, and cysteine 408/cysteine 424. Residues 306-433 (IDGDCFMVSS…CKTRNRYICQ (128 aa)) enclose the C-type lectin domain.

In terms of processing, N-glycosylated. Dectected in all cell lines tested and in peripheral blood cells.

It is found in the secreted. It localises to the endoplasmic reticulum. The protein localises to the golgi apparatus. Its subcellular location is the endosome. In terms of biological role, binds polysaccharides in a Ca(2+)-independent manner with a preferentially binding to fucoidan, beta-glucans and galactans. This is C-type lectin domain family 18 member A (CLEC18A) from Homo sapiens (Human).